Consider the following 567-residue polypeptide: Proton-coupled zinc antiporter SLC30A9, mitochondrial (567 aa).

The next 5 helical transmembrane spans lie at 238–258, 313–333, 341–361, 391–411, and 423–443; these read VVMV…LAWI, GVGI…MGLL, LLWA…TLLV, VILL…TCMG, and SLGS…LIYT. Positions 461-465 match the LXXLL motif motif; the sequence is LTELL.

Belongs to the cation diffusion facilitator (CDF) transporter (TC 2.A.4) family. SLC30A subfamily. In terms of assembly, interacts with GRIP1, ESR1, AR and CTNNB1.

The protein resides in the mitochondrion membrane. The protein localises to the nucleus. It localises to the endoplasmic reticulum. The enzyme catalyses Zn(2+)(in) + 2 H(+)(out) = Zn(2+)(out) + 2 H(+)(in). Functionally, acts as a zinc transporter involved in intracellular zinc homeostasis. Functions as a secondary coactivator for nuclear receptors by cooperating with p160 coactivators subtypes. Plays a role in transcriptional activation of Wnt-responsive genes. Mitochondrial proton-coupled zinc ion antiporter mediating the export of zinc from the mitochondria and involved in zinc homeostasis, zinc mobilization as well as mitochondrial morphology and health. In nucleus, functions as a secondary coactivator for nuclear receptors by cooperating with p160 coactivators subtypes. Plays a role in transcriptional activation of Wnt-responsive genes. This is Proton-coupled zinc antiporter SLC30A9, mitochondrial (Slc30a9) from Mus musculus (Mouse).